A 389-amino-acid chain; its full sequence is Phospho-N-acetylmuramoyl-pentapeptide-transferase (389 aa).

The next 10 helical transmembrane spans lie at 25–45 (RAVMATITALVIGLVCGPWVI), 73–93 (TMGGVLILIGIAVATLLWGDL), 97–117 (FIWIVMLVTFGFGVIGWVDDY), 135–155 (FWQSVIGLFAAVYLAFSVSEA), 190–210 (ISYPLGVWGFIALTYFVIVGA), 222–242 (GLVIMPVVLVGASLGVFAYVM), 258–278 (GAGELLIFCSAMGGAGLAFLW), 286–306 (VFMGDVGALALGGALGTVAVI), 311–331 (IVLFIMGGIFVAETLSVMLQV), and 366–386 (QVVVRFWIITLMLCLFGLSTL).

It belongs to the glycosyltransferase 4 family. MraY subfamily. Requires Mg(2+) as cofactor.

The protein localises to the cell inner membrane. It catalyses the reaction UDP-N-acetyl-alpha-D-muramoyl-L-alanyl-gamma-D-glutamyl-meso-2,6-diaminopimeloyl-D-alanyl-D-alanine + di-trans,octa-cis-undecaprenyl phosphate = di-trans,octa-cis-undecaprenyl diphospho-N-acetyl-alpha-D-muramoyl-L-alanyl-D-glutamyl-meso-2,6-diaminopimeloyl-D-alanyl-D-alanine + UMP. The protein operates within cell wall biogenesis; peptidoglycan biosynthesis. In terms of biological role, catalyzes the initial step of the lipid cycle reactions in the biosynthesis of the cell wall peptidoglycan: transfers peptidoglycan precursor phospho-MurNAc-pentapeptide from UDP-MurNAc-pentapeptide onto the lipid carrier undecaprenyl phosphate, yielding undecaprenyl-pyrophosphoryl-MurNAc-pentapeptide, known as lipid I. The polypeptide is Phospho-N-acetylmuramoyl-pentapeptide-transferase (Burkholderia mallei (strain NCTC 10247)).